Here is a 166-residue protein sequence, read N- to C-terminus: Glycine cleavage system H protein 3, mitochondrial (166 aa).

The transit peptide at 1 to 35 (MALRMWASSTANALKLSSSASKSHLLPAFSISRCF) directs the protein to the mitochondrion. The 83-residue stretch at 57-139 (VATIGITDHA…YEDGWMIKVK (83 aa)) folds into the Lipoyl-binding domain. An N6-lipoyllysine modification is found at K98. S141 bears the Phosphoserine mark.

The protein belongs to the GcvH family. The glycine cleavage system is composed of four proteins: P, T, L and H. (R)-lipoate serves as cofactor. In terms of processing, S-nitrosylated and/or glutathionylated at unknown positions in response to nitric oxide.

The protein resides in the mitochondrion. With respect to regulation, inhibited by harpin, S-nitrosoglutathione (GSNO), nitric oxide, N-ethylmaleimide and 5,5'-dithiobis-(2-nitrobenzoic acid). Its function is as follows. The glycine decarboxylase (GDC) or glycine cleavage system catalyzes the degradation of glycine. The H protein shuttles the methylamine group of glycine from the P protein to the T protein. This chain is Glycine cleavage system H protein 3, mitochondrial (GDH3), found in Arabidopsis thaliana (Mouse-ear cress).